The primary structure comprises 181 residues: Oligoribonuclease (181 aa).

An Exonuclease domain is found at 8 to 171; it reads LIWVDLEMTG…DDIRESIAEL (164 aa). Residue Y129 is part of the active site.

Belongs to the oligoribonuclease family.

Its subcellular location is the cytoplasm. In terms of biological role, 3'-to-5' exoribonuclease specific for small oligoribonucleotides. The polypeptide is Oligoribonuclease (Aliivibrio fischeri (strain ATCC 700601 / ES114) (Vibrio fischeri)).